The sequence spans 319 residues: Cobalamin biosynthesis protein CbiB (319 aa).

Helical transmembrane passes span 56–76 (VMWI…LALA), 82–102 (WLGW…RSLA), 153–173 (VDGI…LAMA), 204–224 (VANY…AGLC), and 296–316 (LMWG…CWLS).

Belongs to the CobD/CbiB family.

Its subcellular location is the cell membrane. It participates in cofactor biosynthesis; adenosylcobalamin biosynthesis. Functionally, converts cobyric acid to cobinamide by the addition of aminopropanol on the F carboxylic group. However, the true cosubstrate could be (R)-1-amino-2-propanol O-2-phosphate, leading to cobinamide phosphate. The protein is Cobalamin biosynthesis protein CbiB of Salmonella arizonae (strain ATCC BAA-731 / CDC346-86 / RSK2980).